The sequence spans 605 residues: MCGIVGVVGSKNATDILMQGLEKLEYRGYDSAGIFVNGQETAAKLVKSVGRIADLRGKLGIDVSGTAGIGHTRWATHGKPTEDNAHPHTSTSGRFILVHNGVIENFVELKNEFLMNDTFKGQTDTEIAVHLIAKFAEEEGLSTLEAFKKALSLIQGSYAFALMDSEDAEVIYVAKNKSPLLIGLGEGYNMVCSDAMAMIRETSEFMEIHDKELVVLTKDNVTVMDYEGNVLSRESYTAELDLSDIGKGTYPFYMLKEIDEQPAVMRKLIATYANEDGTMKVDQDIIKGIQEADRIYIIAAGTSYHAGFGAKMMLESLTNTPVELGLASEWGYDMPLLSQKPFFIFLSQSGETADSRQVLVKVNELGLPSLTVTNVPGSTLSREATYTMLIGAGPEIAVASTKAYTGQIATLAFLAKAVGEAEGEVKAKEFDLVKELSLVAQSIEATLSEKDEIAAIVADLLPTTRNAFYIGRKQDYYVAMEASLKLKEISYIQCEGFAAGELKHGTISLIEKGTPVLALISNNEEVAAHTRGNVMETVARGASAITIVEEGVAREDDTIVVNQVHPYLSAISMVIPTQLIAYYASMQRGLDVDKPRNLAKAVTVE.

The Nucleophile; for GATase activity role is filled by Cys2. The region spanning 2–219 (CGIVGVVGSK…DKELVVLTKD (218 aa)) is the Glutamine amidotransferase type-2 domain. SIS domains are found at residues 285–424 (IIKG…AEGE) and 457–595 (VADL…VDKP). Lys600 acts as the For Fru-6P isomerization activity in catalysis.

As to quaternary structure, homodimer.

Its subcellular location is the cytoplasm. It catalyses the reaction D-fructose 6-phosphate + L-glutamine = D-glucosamine 6-phosphate + L-glutamate. Its function is as follows. Catalyzes the first step in hexosamine metabolism, converting fructose-6P into glucosamine-6P using glutamine as a nitrogen source. The protein is Glutamine--fructose-6-phosphate aminotransferase [isomerizing] of Lactococcus lactis subsp. lactis (strain IL1403) (Streptococcus lactis).